Reading from the N-terminus, the 562-residue chain is SPI-1 type 3 secretion system secretin (562 aa).

An N-terminal signal peptide occupies residues 1-24 (MKTHILLARVLACAALVLVTPGYS).

The protein belongs to the bacterial secretin family. T3SS SctC subfamily. As to quaternary structure, the core secretion machinery of the T3SS is composed of approximately 20 different proteins, including cytoplasmic components, a base, an export apparatus and a needle. This subunit is part of the base, which anchors the injectisome in the bacterial cell envelope. Forms a stable homooligomeric complex. The complex is composed of 15 subunits.

It is found in the cell outer membrane. Component of the type III secretion system (T3SS), also called injectisome, which is used to inject bacterial effector proteins into eukaryotic host cells. Forms a ring-shaped multimeric structure with an apparent central pore in the outer membrane. The sequence is that of SPI-1 type 3 secretion system secretin from Salmonella typhimurium (strain LT2 / SGSC1412 / ATCC 700720).